The sequence spans 1457 residues: Receptor-type tyrosine-protein phosphatase kappa (1457 aa).

The N-terminal stretch at 1–25 (MDVAAAALPAFVALWLLYPWPLLGS) is a signal peptide. Residues 26–752 (ALGQFSAGGC…PAKQTDRVVK (727 aa)) lie on the Extracellular side of the membrane. The region spanning 30-193 (FSAGGCTFDD…IQVLSYPCDK (164 aa)) is the MAM domain. N-linked (GlcNAc...) asparagine glycans are attached at residues asparagine 100, asparagine 139, and asparagine 210. An Ig-like C2-type domain is found at 195-280 (PHFLRLGDVE…TQSERGSGVS (86 aa)). A disulfide bond links cysteine 215 and cysteine 269. Fibronectin type-III domains lie at 293–388 (PIAP…CAEP), 391–487 (TPKT…TDED), 490–594 (GPVP…SAPS), and 595–688 (LPDY…TVGD). Residues asparagine 415, asparagine 423, asparagine 435, asparagine 461, asparagine 551, asparagine 585, asparagine 589, asparagine 606, and asparagine 689 are each glycosylated (N-linked (GlcNAc...) asparagine). A helical membrane pass occupies residues 753 to 774 (IAGISAGILVFILLLLVVIVIV). The Cytoplasmic portion of the chain corresponds to 775–1457 (KKSKLAKKRK…DVALEYLESS (683 aa)). Residue serine 868 is modified to Phosphoserine. Tyrosine-protein phosphatase domains lie at 899–1159 (FKEE…ILEA) and 1191–1453 (LKDE…ALEY). Substrate is bound by residues aspartate 1068, 1100-1106 (CSAGAGR), and glutamine 1144. Cysteine 1100 (phosphocysteine intermediate) is an active-site residue. The Phosphocysteine intermediate role is filled by cysteine 1394.

The protein belongs to the protein-tyrosine phosphatase family. Receptor class 2B subfamily. Post-translationally, this protein undergoes proteolytic processing. In terms of tissue distribution, high levels in liver and kidney. Lower levels in lung, brain and heart. Not seen in spleen and testis.

The protein resides in the membrane. The enzyme catalyses O-phospho-L-tyrosyl-[protein] + H2O = L-tyrosyl-[protein] + phosphate. Functionally, regulation of processes involving cell contact and adhesion such as growth control, tumor invasion, and metastasis. Negative regulator of EGFR signaling pathway. Forms complexes with beta-catenin and gamma-catenin/plakoglobin. Beta-catenin may be a substrate for the catalytic activity of PTPRK/PTP-kappa. This is Receptor-type tyrosine-protein phosphatase kappa (Ptprk) from Mus musculus (Mouse).